We begin with the raw amino-acid sequence, 438 residues long: tRNA-2-methylthio-N(6)-dimethylallyladenosine synthase (438 aa).

An MTTase N-terminal domain is found at 2–118; it reads KSFYLETFGC…LADMVRDAEL (117 aa). 6 residues coordinate [4Fe-4S] cluster: C11, C47, C81, C157, C161, and C164. One can recognise a Radical SAM core domain in the interval 143-373; the sequence is PSAEVSRFVT…LALQEEITRQ (231 aa). The TRAM domain maps to 376-438; the sequence is QMDIGQVLPV…YRNSHLGERV (63 aa).

This sequence belongs to the methylthiotransferase family. MiaB subfamily. As to quaternary structure, monomer. [4Fe-4S] cluster is required as a cofactor.

The protein localises to the cytoplasm. It carries out the reaction N(6)-dimethylallyladenosine(37) in tRNA + (sulfur carrier)-SH + AH2 + 2 S-adenosyl-L-methionine = 2-methylsulfanyl-N(6)-dimethylallyladenosine(37) in tRNA + (sulfur carrier)-H + 5'-deoxyadenosine + L-methionine + A + S-adenosyl-L-homocysteine + 2 H(+). In terms of biological role, catalyzes the methylthiolation of N6-(dimethylallyl)adenosine (i(6)A), leading to the formation of 2-methylthio-N6-(dimethylallyl)adenosine (ms(2)i(6)A) at position 37 in tRNAs that read codons beginning with uridine. The sequence is that of tRNA-2-methylthio-N(6)-dimethylallyladenosine synthase from Syntrophotalea carbinolica (strain DSM 2380 / NBRC 103641 / GraBd1) (Pelobacter carbinolicus).